The primary structure comprises 189 residues: Peptidyl-tRNA hydrolase (189 aa).

TRNA is bound at residue Y15. H20 (proton acceptor) is an active-site residue. F66, N68, and N114 together coordinate tRNA.

Belongs to the PTH family. Monomer.

It localises to the cytoplasm. The enzyme catalyses an N-acyl-L-alpha-aminoacyl-tRNA + H2O = an N-acyl-L-amino acid + a tRNA + H(+). Its function is as follows. Hydrolyzes ribosome-free peptidyl-tRNAs (with 1 or more amino acids incorporated), which drop off the ribosome during protein synthesis, or as a result of ribosome stalling. Functionally, catalyzes the release of premature peptidyl moieties from peptidyl-tRNA molecules trapped in stalled 50S ribosomal subunits, and thus maintains levels of free tRNAs and 50S ribosomes. This chain is Peptidyl-tRNA hydrolase, found in Streptococcus gordonii (strain Challis / ATCC 35105 / BCRC 15272 / CH1 / DL1 / V288).